The following is a 111-amino-acid chain: Propane 2-monooxygenase, effector component (111 aa).

The protein belongs to the TmoD/XamoD family. As to quaternary structure, the propane 2-monooxygenase multicomponent enzyme system is composed of an electron transfer component and a monooxygenase component interacting with the effector protein PrmD. The electron transfer component is composed of a reductase (PrmB), and the monooxygenase component is formed by a large subunit (PrmA) and a small subunit (PrmC).

Effector component of the propane 2-monooxygenase multicomponent enzyme system which is involved in the degradation of propane via the O2-dependent hydroxylation of propane. The chain is Propane 2-monooxygenase, effector component from Gordonia sp. (strain TY-5).